A 154-amino-acid polypeptide reads, in one-letter code: Transcriptional repressor NrdR (154 aa).

Residues 3–34 (CPFCRHPDSRVVDSRETDEGQAIRRRRSCPEC) fold into a zinc finger. The ATP-cone domain maps to 46–136 (LAVVKRSGVT…VYRSFESAAD (91 aa)).

This sequence belongs to the NrdR family. Zn(2+) is required as a cofactor.

Its function is as follows. Negatively regulates transcription of bacterial ribonucleotide reductase nrd genes and operons by binding to NrdR-boxes. This chain is Transcriptional repressor NrdR, found in Mycobacterium sp. (strain JLS).